A 615-amino-acid chain; its full sequence is Threonine--tRNA ligase (615 aa).

The segment at 1 to 132 (MRILQLHCDR…PLAEGFKVIT (132 aa)) is editing domain. Positions 196–495 (PHVALMKRMG…SARGTKPELP (300 aa)) are catalytic. Zn(2+) is bound by residues C288, H340, and H464.

This sequence belongs to the class-II aminoacyl-tRNA synthetase family. Homodimer. Zn(2+) serves as cofactor.

Its subcellular location is the cytoplasm. The catalysed reaction is tRNA(Thr) + L-threonine + ATP = L-threonyl-tRNA(Thr) + AMP + diphosphate + H(+). Catalyzes the attachment of threonine to tRNA(Thr) in a two-step reaction: L-threonine is first activated by ATP to form Thr-AMP and then transferred to the acceptor end of tRNA(Thr). Also edits incorrectly charged L-seryl-tRNA(Thr). The protein is Threonine--tRNA ligase (thrS) of Cenarchaeum symbiosum (strain A).